A 536-amino-acid chain; its full sequence is Membrane protein insertase YidC (536 aa).

A run of 5 helical transmembrane segments spans residues 7 to 27, 332 to 352, 411 to 431, 449 to 469, and 488 to 508; these read LLVM…QQDF, FWLL…IMGV, MGGC…YWTF, LSAQ…MFLL, and FMPV…VLYW.

This sequence belongs to the OXA1/ALB3/YidC family. Type 1 subfamily. In terms of assembly, interacts with the Sec translocase complex via SecD. Specifically interacts with transmembrane segments of nascent integral membrane proteins during membrane integration.

Its subcellular location is the cell inner membrane. Functionally, required for the insertion and/or proper folding and/or complex formation of integral membrane proteins into the membrane. Involved in integration of membrane proteins that insert both dependently and independently of the Sec translocase complex, as well as at least some lipoproteins. Aids folding of multispanning membrane proteins. The protein is Membrane protein insertase YidC of Haemophilus ducreyi (strain 35000HP / ATCC 700724).